Reading from the N-terminus, the 37-residue chain is Potassium channel toxin alpha-KTx 4.8 (37 aa).

2 cysteine pairs are disulfide-bonded: cysteine 13–cysteine 33 and cysteine 17–cysteine 35.

The protein belongs to the short scorpion toxin superfamily. Potassium channel inhibitor family. Alpha-KTx 04 subfamily. As to expression, expressed by the venom gland.

It localises to the secreted. Its function is as follows. Reversible blocker of voltage-gated potassium channel Kv1.2/KCNA2 (Kd=65 nM) and calcium-activated potassium channels KCa2.2/KCNN2 (Kd=575 nM) and KCa3.1/KCNN4 (Kd=59 nM). The protein is Potassium channel toxin alpha-KTx 4.8 of Centruroides margaritatus (Central American bark Scorpion).